Reading from the N-terminus, the 62-residue chain is Sperm protamine P1 (62 aa).

A disordered region spans residues M1 to Y62.

Belongs to the protamine P1 family. As to expression, testis.

It localises to the nucleus. The protein resides in the chromosome. Its function is as follows. Protamines substitute for histones in the chromatin of sperm during the haploid phase of spermatogenesis. They compact sperm DNA into a highly condensed, stable and inactive complex. This is Sperm protamine P1 (PRM1) from Sarcophilus harrisii (Tasmanian devil).